Here is an 841-residue protein sequence, read N- to C-terminus: Envelope glycoprotein H (841 aa).

A signal peptide spans 1-17 (MFALVLAVVILPLWTTA). Residues Asn-18, Asn-45, and Asn-217 are each glycosylated (N-linked (GlcNAc...) asparagine; by host). Over 18 to 802 (NKSYVTPTPA…ERRQAIRMSG (785 aa)) the chain is Virion surface. The interaction with gL stretch occupies residues 246-309 (DSGRVEVNIG…DPGPSYRVYL (64 aa)). N-linked (GlcNAc...) asparagine; by host glycans are attached at residues Asn-317, Asn-499, Asn-522, Asn-760, and Asn-783. Residues 803–823 (QYLGASLGGAFLAVVGFGIIG) traverse the membrane as a helical segment. Over 824-841 (WMLCGNSRLREYNKIPLT) the chain is Intravirion.

Belongs to the herpesviridae glycoprotein H family. As to quaternary structure, interacts with glycoprotein L (gL); this interaction is necessary for the correct processing and cell surface expression of gH. The heterodimer gH/gL seems to interact with gB trimers during fusion. In terms of processing, N-glycosylated, O-glycosylated, and sialylated.

It is found in the virion membrane. It localises to the host cell membrane. The protein localises to the host endosome membrane. The heterodimer glycoprotein H-glycoprotein L is required for the fusion of viral and plasma membranes leading to virus entry into the host cell. Following initial binding to host receptor, membrane fusion is mediated by the fusion machinery composed of gB and the heterodimer gH/gL. May also be involved in the fusion between the virion envelope and the outer nuclear membrane during virion morphogenesis. This chain is Envelope glycoprotein H, found in Varicella-zoster virus (strain Dumas) (HHV-3).